Reading from the N-terminus, the 519-residue chain is Halolysin (519 aa).

Positions 1-27 form a signal peptide, tat-type signal; that stretch reads MAGTPNFDRRSFLRLAAAAGLTGMAGV. Residues 28-116 constitute a propeptide that is removed on maturation; the sequence is TSATPGRSPG…AEKNATHEAL (89 aa). Positions 127–400 constitute a Peptidase S8 domain; that stretch reads QYAPQQVNAD…SGRVDAANAV (274 aa). Active-site charge relay system residues include Asp-154, His-193, and Ser-347. Residues 386–425 are disordered; that stretch reads STKQGSGRVDAANAVTTDPGDGGGGGGGGSKETTYDGTLS. The segment covering 405-415 has biased composition (gly residues); the sequence is GDGGGGGGGGS.

It belongs to the peptidase S8 family. Post-translationally, predicted to be exported by the Tat system. The position of the signal peptide cleavage has not been experimentally proven.

It localises to the secreted. Its function is as follows. Probable secreted halophilic serine protease showing proteolytic activity toward the protease general substrate azocasein. The polypeptide is Halolysin (hly) (Haloferax mediterranei (strain ATCC 33500 / DSM 1411 / JCM 8866 / NBRC 14739 / NCIMB 2177 / R-4) (Halobacterium mediterranei)).